The sequence spans 359 residues: Nicotinate-nucleotide--dimethylbenzimidazole phosphoribosyltransferase (359 aa).

Glu318 (proton acceptor) is an active-site residue.

This sequence belongs to the CobT family. Homodimer.

It catalyses the reaction 5,6-dimethylbenzimidazole + nicotinate beta-D-ribonucleotide = alpha-ribazole 5'-phosphate + nicotinate + H(+). It functions in the pathway nucleoside biosynthesis; alpha-ribazole biosynthesis; alpha-ribazole from 5,6-dimethylbenzimidazole: step 1/2. Catalyzes the synthesis of alpha-ribazole-5'-phosphate from nicotinate mononucleotide (NAMN) and 5,6-dimethylbenzimidazole (DMB). The polypeptide is Nicotinate-nucleotide--dimethylbenzimidazole phosphoribosyltransferase (Escherichia coli O8 (strain IAI1)).